Here is a 293-residue protein sequence, read N- to C-terminus: MADDAGAAGGPGGPGGPGMGNRGGFRGGFGSGIRGRGRGRGRGRGRGRGARGGKAEDKEWMPVTKLGRLVKDMKIKSLEEIYLFSLPIKESEIIDFFLGASLKDEVLKIMPVQKQTRAGQRTRFKAFVAIGDYNGHVGLGVKCSKEVATAIRGAIILAKLSIVPVRRGYWGNKIGKPHTVPCKVTGRCGSVLVRLIPAPRGTGIVSAPVPKKLLMMAGIDDCYTSARGCTATLGNFAKATFDAISKTYSYLTPDLWKETVFTKSPYQEFTDHLVKTHTRVSVQRTQAPAVATT.

The tract at residues 1–56 (MADDAGAAGGPGGPGGPGMGNRGGFRGGFGSGIRGRGRGRGRGRGRGRGARGGKAE) is disordered. Residue alanine 2 is modified to N-acetylalanine. Positions 7–34 (AAGGPGGPGGPGMGNRGGFRGGFGSGIR) are enriched in gly residues. Residues 35 to 51 (GRGRGRGRGRGRGRGAR) show a composition bias toward basic residues. Glycyl lysine isopeptide (Lys-Gly) (interchain with G-Cter in ubiquitin) cross-links involve residues lysine 54 and lysine 58. Positions 102-165 (LKDEVLKIMP…ILAKLSIVPV (64 aa)) constitute an S5 DRBM domain. Threonine 252 carries the phosphothreonine modification. The residue at position 263 (lysine 263) is an N6-acetyllysine. Phosphoserine is present on serine 264. Threonine 270 carries the phosphothreonine modification. Position 275 is an N6-acetyllysine; alternate (lysine 275). Residue lysine 275 forms a Glycyl lysine isopeptide (Lys-Gly) (interchain with G-Cter in SUMO1); alternate linkage. A Glycyl lysine isopeptide (Lys-Gly) (interchain with G-Cter in SUMO2); alternate cross-link involves residue lysine 275. Lysine 275 is covalently cross-linked (Glycyl lysine isopeptide (Lys-Gly) (interchain with G-Cter in ubiquitin); alternate). Residue serine 281 is modified to Phosphoserine.

This sequence belongs to the universal ribosomal protein uS5 family. In terms of assembly, component of the small ribosomal subunit. Interacts with zinc finger protein ZNF277 (via zinc-finger domains); the interaction is direct; the interaction is extra-ribosomal. Interaction with ZNF277 competes with the binding of RPS2 to protein arginine methyltransferase PRMT3. In terms of processing, citrullinated by PADI4 in the Arg/Gly-rich region. Post-translationally, asymmetric arginine dimethylation by PRMT3 occurs at multiple sites in the Arg/Gly-rich region. Monoubiquitinated at Lys-54 and Lys-58 by RNF10 when a ribosome has stalled during translation, leading to its degradation by the proteasome. Deubiquitinated at Lys-54 and Lys-58 by USP10, preventing degradation by the proteasome and promoting 40S ribosome subunit recycling following ribosome dissociation.

It is found in the cytoplasm. Its subcellular location is the nucleus. The protein resides in the nucleolus. Component of the ribosome, a large ribonucleoprotein complex responsible for the synthesis of proteins in the cell. The small ribosomal subunit (SSU) binds messenger RNAs (mRNAs) and translates the encoded message by selecting cognate aminoacyl-transfer RNA (tRNA) molecules. The large subunit (LSU) contains the ribosomal catalytic site termed the peptidyl transferase center (PTC), which catalyzes the formation of peptide bonds, thereby polymerizing the amino acids delivered by tRNAs into a polypeptide chain. The nascent polypeptides leave the ribosome through a tunnel in the LSU and interact with protein factors that function in enzymatic processing, targeting, and the membrane insertion of nascent chains at the exit of the ribosomal tunnel. Plays a role in the assembly and function of the 40S ribosomal subunit. Mutations in this protein affects the control of translational fidelity. Involved in nucleolar processing of pre-18S ribosomal RNA and ribosome assembly. The polypeptide is Small ribosomal subunit protein uS5 (RPS2) (Homo sapiens (Human)).